A 325-amino-acid polypeptide reads, in one-letter code: Elongation factor P--(R)-beta-lysine ligase (325 aa).

76-78 (SPE) serves as a coordination point for substrate. ATP-binding positions include 100 to 102 (RNE) and Asn-109. Position 118 (Tyr-118) interacts with substrate. Residue 244-245 (EL) participates in ATP binding. Residue Glu-251 coordinates substrate. Gly-300 is an ATP binding site.

Belongs to the class-II aminoacyl-tRNA synthetase family. EpmA subfamily. In terms of assembly, homodimer.

It catalyses the reaction D-beta-lysine + L-lysyl-[protein] + ATP = N(6)-((3R)-3,6-diaminohexanoyl)-L-lysyl-[protein] + AMP + diphosphate + H(+). Its function is as follows. With EpmB is involved in the beta-lysylation step of the post-translational modification of translation elongation factor P (EF-P) on 'Lys-34'. Catalyzes the ATP-dependent activation of (R)-beta-lysine produced by EpmB, forming a lysyl-adenylate, from which the beta-lysyl moiety is then transferred to the epsilon-amino group of EF-P 'Lys-34'. The polypeptide is Elongation factor P--(R)-beta-lysine ligase (Salmonella gallinarum (strain 287/91 / NCTC 13346)).